A 446-amino-acid polypeptide reads, in one-letter code: Xylose isomerase 1 (446 aa).

Residues His-109 and Asp-112 contribute to the active site. Glu-240, Glu-276, His-279, Asp-304, Asp-315, Asp-317, and Asp-347 together coordinate Mg(2+).

The protein belongs to the xylose isomerase family. In terms of assembly, homotetramer. Mg(2+) is required as a cofactor.

Its subcellular location is the cytoplasm. It catalyses the reaction alpha-D-xylose = alpha-D-xylulofuranose. This chain is Xylose isomerase 1, found in Xanthomonas campestris pv. campestris (strain 8004).